Here is a 355-residue protein sequence, read N- to C-terminus: Replication-associated protein (355 aa).

Residues 11–114 (SHRNVNTFLT…PLAVFERGTF (104 aa)) form the CRESS-DNA virus Rep endonuclease domain. An RCR-1 motif is present at residues 18–21 (FLTY). Positions 52, 60, and 62 each coordinate a divalent metal cation. Positions 60–62 (HLH) match the RCR-2 motif. Tyr-100 serves as the catalytic For DNA cleavage activity. Residues 100–103 (YILK) carry the RCR-3 motif. Glu-104 provides a ligand contact to a divalent metal cation. Positions 119–128 (SSFQGNPSKG) are enriched in polar residues. The segment at 119–138 (SSFQGNPSKGNSEKKPSKDE) is disordered. Over residues 129 to 138 (NSEKKPSKDE) the composition is skewed to basic and acidic residues. The interval 175–187 (SANKLFPEIQEEF) is oligomerization. ATP is bound at residue 229–236 (GPTRTGKS). Positions 252–270 (VDWSSYNEDAIYNIVDDIP) are transactivation. The Nuclear localization signal signature appears at 292-303 (KYGKKKKVQMKS).

This sequence belongs to the geminiviridae Rep protein family. As to quaternary structure, homooligomer. Rep binds to repeated DNA motifs (iterons). Forms the O-complex, which is a Rep-DNA complex involved in the initiation of RCR. Part of the C- and V-complexes which are RepA-Rep-DNA complexes involved in the c-sense and v-sense transcription. The cofactor is Mg(2+). It depends on Mn(2+) as a cofactor.

It is found in the host nucleus. In terms of biological role, essential for the replication of viral ssDNA. The closed circular ssDNA genome is first converted to a superhelical dsDNA. Rep binds a specific region at the genome origin of replication. It introduces an endonucleolytic nick within the conserved sequence 5'-TAATATTAC-3' in the intergenic region of the genome present in all geminiviruses, thereby initiating the rolling circle replication (RCR). Following cleavage, binds covalently to the 5'-phosphate of DNA as a tyrosyl ester. The cleavage gives rise to a free 3'-OH that serves as a primer for the cellular DNA polymerase. The polymerase synthesizes the (+) strand DNA by rolling circle mechanism. After one round of replication, a Rep-catalyzed nucleotidyl transfer reaction releases a circular single-stranded virus genome, thereby terminating the replication. Displays origin-specific DNA cleavage, nucleotidyl transferase, ATPase and helicase activities. Acts as an inhibitor of C-sense gene transcription. In Maize streak virus genotype B (isolate Tas) (MSV), this protein is Replication-associated protein.